Here is a 323-residue protein sequence, read N- to C-terminus: Phosphatidylglycerol--prolipoprotein diacylglyceryl transferase (323 aa).

3 consecutive transmembrane segments (helical) span residues 15-35 (VIQG…ILIS), 58-78 (FMFS…TLVY), and 106-126 (GMAI…TINT). R156 is an a 1,2-diacyl-sn-glycero-3-phospho-(1'-sn-glycerol) binding site. A run of 2 helical transmembrane segments spans residues 242–262 (GFIF…IEYL) and 289–309 (ISMG…WIIV).

It belongs to the Lgt family.

The protein resides in the cell inner membrane. The enzyme catalyses L-cysteinyl-[prolipoprotein] + a 1,2-diacyl-sn-glycero-3-phospho-(1'-sn-glycerol) = an S-1,2-diacyl-sn-glyceryl-L-cysteinyl-[prolipoprotein] + sn-glycerol 1-phosphate + H(+). Its pathway is protein modification; lipoprotein biosynthesis (diacylglyceryl transfer). Functionally, catalyzes the transfer of the diacylglyceryl group from phosphatidylglycerol to the sulfhydryl group of the N-terminal cysteine of a prolipoprotein, the first step in the formation of mature lipoproteins. The protein is Phosphatidylglycerol--prolipoprotein diacylglyceryl transferase of Borreliella afzelii (strain PKo) (Borrelia afzelii).